Here is a 485-residue protein sequence, read N- to C-terminus: Cobyric acid synthase (485 aa).

The GATase cobBQ-type domain maps to 250 to 436; that stretch reads RVLVACPILP…VHGLLANADL (187 aa). The active-site Nucleophile is cysteine 332. The active site involves histidine 428.

This sequence belongs to the CobB/CobQ family. CobQ subfamily.

Its pathway is cofactor biosynthesis; adenosylcobalamin biosynthesis. Its function is as follows. Catalyzes amidations at positions B, D, E, and G on adenosylcobyrinic A,C-diamide. NH(2) groups are provided by glutamine, and one molecule of ATP is hydrogenolyzed for each amidation. This Rhizorhabdus wittichii (strain DSM 6014 / CCUG 31198 / JCM 15750 / NBRC 105917 / EY 4224 / RW1) (Sphingomonas wittichii) protein is Cobyric acid synthase.